The following is a 248-amino-acid chain: Triosephosphate isomerase (248 aa).

9 to 11 (NWK) contributes to the substrate binding site. The active-site Electrophile is histidine 94. Residue glutamate 166 is the Proton acceptor of the active site. Residues glycine 172, serine 212, and 233–234 (GG) contribute to the substrate site.

It belongs to the triosephosphate isomerase family. As to quaternary structure, homodimer.

It is found in the cytoplasm. The enzyme catalyses D-glyceraldehyde 3-phosphate = dihydroxyacetone phosphate. It functions in the pathway carbohydrate biosynthesis; gluconeogenesis. It participates in carbohydrate degradation; glycolysis; D-glyceraldehyde 3-phosphate from glycerone phosphate: step 1/1. Its function is as follows. Involved in the gluconeogenesis. Catalyzes stereospecifically the conversion of dihydroxyacetone phosphate (DHAP) to D-glyceraldehyde-3-phosphate (G3P). The protein is Triosephosphate isomerase of Clostridium botulinum (strain Eklund 17B / Type B).